Consider the following 47-residue polypeptide: Large ribosomal subunit protein bL34 (47 aa).

It belongs to the bacterial ribosomal protein bL34 family.

In Mycobacterium leprae (strain TN), this protein is Large ribosomal subunit protein bL34 (rpmH).